Consider the following 172-residue polypeptide: Putative defense protein (172 aa).

The first 21 residues, 1–21 (MKLVVAAVLAMAASRWRRLSA), serve as a signal peptide directing secretion. The region spanning 22–172 (HGQVPSSTCA…LRQLDNAVAA (151 aa)) is the Reelin domain.

Belongs to the insect defense protein family. In terms of tissue distribution, in adults, in hemolymph.

The protein localises to the secreted. Its function is as follows. May have antimicrobial activity. The protein is Putative defense protein of Locusta migratoria (Migratory locust).